The chain runs to 250 residues: Entry-fusion complex associated protein OPG095 (250 aa).

A lipid anchor (N-myristoyl glycine; by host) is attached at glycine 2. The targeting to MV membrane stretch occupies residues 2–12 (GAAASIQTTVN). The Virion surface segment spans residues 2–183 (GAAASIQTTV…IAPKQVAGTG (182 aa)). Cystine bridges form between cysteine 34-cysteine 57, cysteine 49-cysteine 136, and cysteine 116-cysteine 158. A helical transmembrane segment spans residues 184–204 (VQFYMIVIGVIILAALFMYYA). Residues 205–250 (KRMLFTSTNDKIKLILANKENVHWTTYMDTFFRTSPMVIATTDMQN) lie on the Intravirion side of the membrane.

It belongs to the orthopoxvirus OPG095 family. In terms of assembly, component of the entry fusion complex (EFC) composed of OPG053/F9, OPG076/O3, OPG086/G3, OPG094/G9, OPG095/L1, OPG099/L5, OPG107/H2, OPG143/A16, OPG104/J5, OPG147/A21 and OPG155/A28. Except for OPG095/L1 and OPG053/F9, each of the EFC proteins is required for assembly or stability of the complex. In terms of processing, myristoylated. Post-translationally, disulfid bonds are oxidized in the cytoplasm by OPG088 protein. Unglycosylated because produced in viral factories instead of the classic ER -Golgi route.

It is found in the virion membrane. Its function is as follows. Component of the entry fusion complex (EFC), which consists of 11 proteins. During cell infection, this complex mediates entry of the virion core into the host cytoplasm by a two-step mechanism consisting of lipid mixing of the viral and cellular membranes and subsequent pore formation. The sequence is that of Entry-fusion complex associated protein OPG095 (OPG099) from Bos taurus (Bovine).